The sequence spans 199 residues: Protein-methionine-sulfoxide reductase heme-binding subunit MsrQ (199 aa).

6 consecutive transmembrane segments (helical) span residues 8–28 (IAWLKVFLHLAGFLPLVWLFW), 54–74 (FLLATLLVAPLARYAKQPLLI), 82–102 (LWCFAWATLHLTSYTLLELGI), 116–136 (PYLTLGMICWVILLALAATST), 149–169 (LLHNFVYLVAILAPIHYLWSV), and 171–191 (IVSPQPIIYALLAVVLLACRY).

It belongs to the MsrQ family. Heterodimer of a catalytic subunit (MsrP) and a heme-binding subunit (MsrQ). Requires FMN as cofactor. The cofactor is heme b.

The protein localises to the cell inner membrane. Its function is as follows. Part of the MsrPQ system that repairs oxidized periplasmic proteins containing methionine sulfoxide residues (Met-O), using respiratory chain electrons. Thus protects these proteins from oxidative-stress damage caused by reactive species of oxygen and chlorine generated by the host defense mechanisms. MsrPQ is essential for the maintenance of envelope integrity under bleach stress, rescuing a wide series of structurally unrelated periplasmic proteins from methionine oxidation. MsrQ provides electrons for reduction to the reductase catalytic subunit MsrP, using the quinone pool of the respiratory chain. This Klebsiella pneumoniae (strain 342) protein is Protein-methionine-sulfoxide reductase heme-binding subunit MsrQ.